Reading from the N-terminus, the 224-residue chain is Thiamine-triphosphatase (224 aa).

Residue Ala2 is modified to N-acetylalanine. In terms of domain architecture, CYTH spans 5-201; that stretch reads LIEVERKFTP…AKLLVYLQRF (197 aa). Residues Glu7 and Glu9 each coordinate Mg(2+). 5 residues coordinate substrate: Lys11, Arg55, Arg57, Lys65, and Arg125. 3 residues coordinate Mg(2+): Asp145, Glu157, and Glu159. Glu157 is a substrate binding site. Lys193 is a substrate binding site.

It belongs to the ThTPase family. Monomer. Mg(2+) serves as cofactor.

It localises to the cytoplasm. It carries out the reaction thiamine triphosphate + H2O = thiamine diphosphate + phosphate + H(+). In terms of biological role, hydrolase highly specific for thiamine triphosphate (ThTP). The sequence is that of Thiamine-triphosphatase (Thtpa) from Rattus norvegicus (Rat).